The sequence spans 349 residues: Protein-glutamate methylesterase/protein-glutamine glutaminase (349 aa).

The 118-residue stretch at 5–122 folds into the Response regulatory domain; sequence RVLSVDDSAL…REGMLAYSEM (118 aa). Residue D56 is modified to 4-aspartylphosphate. The 193-residue stretch at 152 to 344 folds into the CheB-type methylesterase domain; sequence LLSSEKLIAI…QQMLAKISAG (193 aa). Catalysis depends on residues S164, H190, and D286.

It belongs to the CheB family. In terms of processing, phosphorylated by CheA. Phosphorylation of the N-terminal regulatory domain activates the methylesterase activity.

The protein localises to the cytoplasm. The catalysed reaction is [protein]-L-glutamate 5-O-methyl ester + H2O = L-glutamyl-[protein] + methanol + H(+). The enzyme catalyses L-glutaminyl-[protein] + H2O = L-glutamyl-[protein] + NH4(+). In terms of biological role, involved in chemotaxis. Part of a chemotaxis signal transduction system that modulates chemotaxis in response to various stimuli. Catalyzes the demethylation of specific methylglutamate residues introduced into the chemoreceptors (methyl-accepting chemotaxis proteins or MCP) by CheR. Also mediates the irreversible deamidation of specific glutamine residues to glutamic acid. The chain is Protein-glutamate methylesterase/protein-glutamine glutaminase from Escherichia coli O6:K15:H31 (strain 536 / UPEC).